The following is a 553-amino-acid chain: Zinc finger protein Elbow (553 aa).

Disordered stretches follow at residues 59–243 (STKQ…MHSP) and 388–407 (GGGGGGSSKSSGSQGGSGGS). 2 stretches are compositionally biased toward low complexity: residues 96–110 (SPVSSHSSSVSTGSV) and 121–134 (SSSSSKPTPTTFKP). 3 stretches are compositionally biased toward polar residues: residues 137 to 146 (PNNNISNITT), 153 to 173 (TNLSSNNTSAQQRVKTPKSMT), and 224 to 236 (TASTTPGRSNSKE). The tract at residues 287 to 480 (SASAAAAAAS…PDAVLSAAAA (194 aa)) is self-association. The segment at 287–553 (SASAAAAAAS…YGPRMGSSHP (267 aa)) is interaction with noc. The span at 388–406 (GGGGGGSSKSSGSQGGSGG) shows a compositional bias: gly residues. The C2H2-type zinc finger occupies 437–466 (YVCSWIGSDAAYCGKRFGTSDDLFQHLRTH).

It belongs to the Elbow/Noc family. As to quaternary structure, self-associates. Interacts with gro and noc.

Functionally, may negatively regulate Notch-induced cell proliferation in the eye-head primordium. May act in leg and wing primordia to negatively regulate body-wall specifying genes and thereby promote appendage formation. Required for tracheal development. This is Zinc finger protein Elbow (elB) from Drosophila melanogaster (Fruit fly).